Here is a 301-residue protein sequence, read N- to C-terminus: Ribosomal protein L11 methyltransferase (301 aa).

Residues threonine 152, glycine 173, aspartate 195, and asparagine 236 each coordinate S-adenosyl-L-methionine.

It belongs to the methyltransferase superfamily. PrmA family.

It localises to the cytoplasm. The catalysed reaction is L-lysyl-[protein] + 3 S-adenosyl-L-methionine = N(6),N(6),N(6)-trimethyl-L-lysyl-[protein] + 3 S-adenosyl-L-homocysteine + 3 H(+). Methylates ribosomal protein L11. This chain is Ribosomal protein L11 methyltransferase, found in Dictyoglomus thermophilum (strain ATCC 35947 / DSM 3960 / H-6-12).